Consider the following 82-residue polypeptide: Small ribosomal subunit protein bS18 (82 aa).

The interval 1–20 is disordered; the sequence is MVDINQIPTRRPFHRRRKTC.

This sequence belongs to the bacterial ribosomal protein bS18 family. Part of the 30S ribosomal subunit. Forms a tight heterodimer with protein bS6.

Its function is as follows. Binds as a heterodimer with protein bS6 to the central domain of the 16S rRNA, where it helps stabilize the platform of the 30S subunit. This chain is Small ribosomal subunit protein bS18, found in Chelativorans sp. (strain BNC1).